The chain runs to 310 residues: Mas-related G-protein coupled receptor member E (310 aa).

The Extracellular segment spans residues 1 to 22 (MTSLSVHTDSPSTQGEMAFNLT). N-linked (GlcNAc...) asparagine glycosylation is present at Asn20. A helical transmembrane segment spans residues 23 to 43 (ILSLTELLSLGGLLGNGVALW). Residues 44 to 60 (LLNQNVYRNPFSIYLLD) are Cytoplasmic-facing. The chain crosses the membrane as a helical span at residues 61-81 (VACADLIFLCCHMVAIIPELL). Residues 82-92 (QDQLNFPEFVH) lie on the Extracellular side of the membrane. Residues 93–113 (ISLTMLRFFCYIVGLSLLAAI) traverse the membrane as a helical segment. Topologically, residues 114-133 (STEQCLATLFPAWYLCRRPR) are cytoplasmic. The helical transmembrane segment at 134–154 (YLTTCVCALIWVLCLLLDLLL) threads the bilayer. The Extracellular portion of the chain corresponds to 155 to 174 (SGACTQFFGAPSYHLCDMLW). Residues 175-195 (LVVAVLLAALCCTMCVTSLLL) form a helical membrane-spanning segment. Residues 196 to 213 (LLRVERGPERHQPRGFPT) are Cytoplasmic-facing. Residues 214-234 (LVLLAVLLFLFCGLPFGIFWL) traverse the membrane as a helical segment. At 235-248 (SKNLSWHIPLYFYH) the chain is on the extracellular side. Asn237 carries an N-linked (GlcNAc...) asparagine glycan. A helical transmembrane segment spans residues 249-269 (FSFFMASVHSAAKPAIYFFLG). Topologically, residues 270–310 (STPGQRFREPLRLVLQRALGDEAELGAGREASQGGLVDMTV) are cytoplasmic.

Belongs to the G-protein coupled receptor 1 family. Mas subfamily.

It localises to the cell membrane. Orphan receptor. May regulate nociceptor function and/or development, including the sensation or modulation of pain. The protein is Mas-related G-protein coupled receptor member E (Mrgpre) of Mus musculus (Mouse).